A 622-amino-acid chain; its full sequence is Probable ATP-dependent RNA helicase DDX41 (622 aa).

Residues methionine 1–glutamate 15 show a composition bias toward basic and acidic residues. Disordered stretches follow at residues methionine 1 to leucine 39 and leucine 51 to asparagine 84. Serine 4 is subject to Phosphoserine. Lysine 9 is subject to N6-acetyllysine. Residue lysine 9 forms a Glycyl lysine isopeptide (Lys-Gly) (interchain with G-Cter in ubiquitin) linkage. 2 positions are modified to phosphoserine: serine 21 and serine 23. The span at glutamate 24–tyrosine 33 shows a compositional bias: acidic residues. Tyrosine 33 is modified (phosphotyrosine). Lysine 115 participates in a covalent cross-link: Glycyl lysine isopeptide (Lys-Gly) (interchain with G-Cter in ubiquitin). Residues lysine 181 to isoleucine 209 carry the Q motif motif. The region spanning isoleucine 212–isoleucine 396 is the Helicase ATP-binding domain. Residue alanine 225 to threonine 232 coordinates ATP. Positions aspartate 344–aspartate 347 match the DEAD box motif. Positions aspartate 407–histidine 567 constitute a Helicase C-terminal domain. The residue at position 414 (tyrosine 414) is a Phosphotyrosine. Residues lysine 416 and lysine 442 each participate in a glycyl lysine isopeptide (Lys-Gly) (interchain with G-Cter in SUMO2) cross-link. The segment at arginine 580 to lysine 597 adopts a CCHC-type zinc-finger fold.

This sequence belongs to the DEAD box helicase family. DDX41 subfamily. Identified in the spliceosome C complex. Interacts with ERCC6. Interacts with FAM50A. Interacts with STING1. Interacts with CGAS. Interacts with several spliceosomes components such as PRP19 or CDC5L. Acetylation at Lys-9 regulates the nuclear/cytoplasmic localization. In terms of processing, phosphorylated by BTK; phosphorylation induces binding to dsDNA and STING1. Post-translationally, 'Lys-48'-linked ubiquitinated and degraded by TRIM21 leading to negative regulation of the innate immune response to intracellular dsDNA.

Its subcellular location is the nucleus. The protein localises to the cytoplasm. The enzyme catalyses ATP + H2O = ADP + phosphate + H(+). Its function is as follows. Multifunctional protein that participates in many aspects of cellular RNA metabolism. Plays pivotal roles in innate immune sensing and hematopoietic homeostasis. Recognizes foreign or self-nucleic acids generated during microbial infection, thereby initiating anti-pathogen responses. Mechanistically, phosphorylation by BTK allows binding to dsDNA leading to interaction with STING1. Modulates the homeostasis of dsDNA through its ATP-dependent DNA-unwinding activity and ATP-independent strand-annealing activity. In turn, induces STING1-mediated type I interferon and cytokine responses to DNA and DNA viruses. During murine leukemia virus infection, primarily senses the DNA/RNA hybrid generated at the first step of reverse transcription, while cGAS recognizes dsDNA generated at the next step and both are needed for the antiretroviral innate immune response. Selectively modulates the transcription of certain immunity-associated genes by regulating their alternative splicing. Binds to RNA (R)-loops, structures consisting of DNA/RNA hybrids and a displaced strand of DNA that occur during transcription, and prevents their accumulation, thereby maintaining genome stability. Also participates in pre-mRNA splicing, translational regulation and snoRNA processing, which is essential for ribosome biogenesis. The sequence is that of Probable ATP-dependent RNA helicase DDX41 (Ddx41) from Mus musculus (Mouse).